A 608-amino-acid polypeptide reads, in one-letter code: 1-deoxy-D-xylulose-5-phosphate synthase (608 aa).

Residues histidine 80 and 121–123 contribute to the thiamine diphosphate site; that span reads GHS. Aspartate 152 is a Mg(2+) binding site. Thiamine diphosphate contacts are provided by residues 153–154, asparagine 181, tyrosine 282, and glutamate 357; that span reads GA. Residue asparagine 181 participates in Mg(2+) binding.

This sequence belongs to the transketolase family. DXPS subfamily. Homodimer. Requires Mg(2+) as cofactor. It depends on thiamine diphosphate as a cofactor.

The enzyme catalyses D-glyceraldehyde 3-phosphate + pyruvate + H(+) = 1-deoxy-D-xylulose 5-phosphate + CO2. It participates in metabolic intermediate biosynthesis; 1-deoxy-D-xylulose 5-phosphate biosynthesis; 1-deoxy-D-xylulose 5-phosphate from D-glyceraldehyde 3-phosphate and pyruvate: step 1/1. Functionally, catalyzes the acyloin condensation reaction between C atoms 2 and 3 of pyruvate and glyceraldehyde 3-phosphate to yield 1-deoxy-D-xylulose-5-phosphate (DXP). In Buchnera aphidicola subsp. Acyrthosiphon pisum (strain 5A), this protein is 1-deoxy-D-xylulose-5-phosphate synthase.